A 456-amino-acid chain; its full sequence is Perilipin-5 (456 aa).

The segment at 1–20 (MSEDEAAQAPGPSLSEQDQQ) is disordered. The interaction with LIPE stretch occupies residues 1 to 108 (MSEDEAAQAP…KLEEKLPFLQ (108 aa)). The interval 1-173 (MSEDEAAQAP…HFLPMTEEEL (173 aa)) is essential for lipid droplet targeting. Residues Ser-2, Ser-148, and Ser-324 each carry the phosphoserine modification. The interval 185 to 456 (VGSVEEQRKH…KHTLMPELDF (272 aa)) is interaction with PNPLA2 and ABHD5. Residues 420 to 456 (AWQAQHGEGTVLSGNIPEEEPEPPSRPKHTLMPELDF) form a disordered region. Positions 438–456 (EEPEPPSRPKHTLMPELDF) are recruits mitochondria at the lipid droplet surface.

This sequence belongs to the perilipin family. In terms of assembly, homooligomer. Interacts with PNPLA2; prevents interaction of PNPLA2 with ABHD5. Interacts with ABHD5; targets ABHD5 to lipid droplets and promotes interaction of ABHD5 with PNPLA2. Interacts with LIPE. In terms of processing, phosphorylated by PKA. Phosphorylated on serine in skeletal muscle at rest or upon lipolytic stimulation.

It is found in the lipid droplet. It localises to the cytoplasm. The protein resides in the mitochondrion. Functionally, lipid droplet-associated protein that maintains the balance between lipogenesis and lipolysis and also regulates fatty acid oxidation in oxidative tissues. Recruits mitochondria to the surface of lipid droplets and is involved in lipid droplet homeostasis by regulating both the storage of fatty acids in the form of triglycerides and the release of fatty acids for mitochondrial fatty acid oxidation. In lipid droplet triacylglycerol hydrolysis, plays a role as a scaffolding protein for three major key lipolytic players: ABHD5, PNPLA2 and LIPE. Reduces the triacylglycerol hydrolase activity of PNPLA2 by recruiting and sequestering PNPLA2 to lipid droplets. Phosphorylation by PKA enables lipolysis probably by promoting release of ABHD5 from the perilipin scaffold and by facilitating interaction of ABHD5 with PNPLA2. Also increases lipolysis through interaction with LIPE and upon PKA-mediated phosphorylation of LIPE. The sequence is that of Perilipin-5 (Plin5) from Ovis aries (Sheep).